We begin with the raw amino-acid sequence, 1461 residues long: DNA topoisomerase 2 (1461 aa).

Residues 1–17 (MSESESDYFTDGSEDDF) are compositionally biased toward acidic residues. Residues 1 to 61 (MSESESDYFT…TPKPTNASET (61 aa)) form a disordered region. The segment covering 41–52 (TNSTVSSSRSST) has biased composition (low complexity). ATP contacts are provided by residues asparagine 120, asparagine 149, 177 to 179 (SSN), and 190 to 197 (GRNGFGAK). An interaction with DNA region spans residues 382-389 (SKKEKGKK). 418-420 (QTK) is an ATP binding site. The 117-residue stretch at 498–614 (CTLILTEGLS…GLLDIPGFLL (117 aa)) folds into the Toprim domain. Mg(2+) is bound by residues glutamate 504, aspartate 583, and aspartate 585. Residues 752-1226 (IPSVLDGFKP…SAKDLWNQDL (475 aa)) form the Topo IIA-type catalytic domain. Tyrosine 842 acts as the O-(5'-phospho-DNA)-tyrosine intermediate in catalysis. An interaction with DNA region spans residues 1024–1033 (KLVSSLSLAN). Disordered regions lie at residues 1122 to 1155 (DGKPIKSSEELLTGDDADEEEETQEQEGDEDVGN) and 1244 to 1461 (RESL…IVDE). Positions 1133–1153 (LTGDDADEEEETQEQEGDEDV) are enriched in acidic residues. Residues 1251–1261 (GKKKSTKRRAK) show a composition bias toward basic residues. Basic and acidic residues-rich tracts occupy residues 1274 to 1283 (VKVEPKEKKS) and 1406 to 1417 (DKPEPKERRTRE). Acidic residues predominate over residues 1434–1461 (DSDDEDEDEEDDIVMSDGDDDDDFIVDE).

This sequence belongs to the type II topoisomerase family. In terms of assembly, homodimer. Mg(2+) serves as cofactor. Requires Mn(2+) as cofactor. The cofactor is Ca(2+).

It is found in the nucleus. The enzyme catalyses ATP-dependent breakage, passage and rejoining of double-stranded DNA.. Control of topological states of DNA by transient breakage and subsequent rejoining of DNA strands. Topoisomerase II makes double-strand breaks. This chain is DNA topoisomerase 2 (TOP2), found in Candida albicans (Yeast).